A 38-amino-acid chain; its full sequence is Alpha-2-macroglobulin homolog (38 aa).

The segment at residues Cys-27–Gln-30 is a cross-link (isoglutamyl cysteine thioester (Cys-Gln)).

The protein belongs to the protease inhibitor I39 (alpha-2-macroglobulin) family. Homodimer; disulfide-linked. As to expression, hemolymph.

It is found in the secreted. Is able to inhibit all four classes of proteinases by a unique 'trapping' mechanism. This protein has a peptide stretch, called the 'bait region' which contains specific cleavage sites for different proteinases. When a proteinase cleaves the bait region, a conformational change is induced in the protein which traps the proteinase. The entrapped enzyme remains active against low molecular weight substrates (activity against high molecular weight substrates is greatly reduced). Following cleavage in the bait region a thioester bond is hydrolyzed and mediates the covalent binding of the protein to the proteinase. This is Alpha-2-macroglobulin homolog from Homarus americanus (American lobster).